Consider the following 963-residue polypeptide: Spliceosome associated factor 3, U4/U6 recycling protein (963 aa).

Low complexity predominate over residues Met1 to Glu11. Disordered stretches follow at residues Met1 to Arg36 and Lys49 to Glu86. The residue at position 2 (Ala2) is an N-acetylalanine. Positions Ala2–Ser351 are mediates interaction with PRPF3. A phosphoserine mark is found at Ser10 and Ser16. A compositionally biased stretch (basic and acidic residues) spans Ala14–Asp23. The stretch at Lys21 to Ala46 forms a coiled coil. A compositionally biased stretch (acidic residues) spans Gln57 to Glu69. Positions Glu82 to Tyr110 form a coiled coil. HAT repeat units follow at residues Gly126–Ser158, Leu164–Gly195, Gly201–Ala237, Ala242–Asp275, Gly324–Arg356, Lys359–Arg391, Val394–Arg430, and Asn487–Ala520. Ser215 is modified (phosphoserine). The segment at Asn487–Ala520 is required for interaction with USP4. The interval Cys537–Asn953 is necessary and sufficient for U6 snRNA binding. Positions Leu559–Gly619 form a coiled coil. A required for nuclear localization region spans residues Gln600–Cys670. Residues Arg601–Lys608 carry the Nuclear localization signal motif. The span at Lys608–Gly619 shows a compositional bias: basic and acidic residues. The segment at Lys608–Pro712 is disordered. Residues Pro620 to Asp635 are compositionally biased toward basic residues. A compositionally biased stretch (acidic residues) spans Arg644–Thr657. A Phosphoserine modification is found at Ser650. Thr657 bears the Phosphothreonine mark. Basic and acidic residues predominate over residues Val695–Pro712. Positions Ile704–Asp782 constitute an RRM 1 domain. Phosphoserine is present on residues Ser769, Ser795, and Ser852. Positions His801–Pro878 constitute an RRM 2 domain. The span at Pro900–Gly909 shows a compositional bias: basic and acidic residues. Arg906 carries the post-translational modification Omega-N-methylarginine.

As to quaternary structure, component of the 7SK snRNP complex at least composed of P-TEFb (composed of CDK9 and CCNT1/cyclin-T1), HEXIM1, HEXIM2, BCDIN3, SART3 proteins and 7SK and U6 snRNAs. Interacts with AGO1 and AGO2. Interacts with PRPF3 and USP4; the interaction with PRPF3 is direct and recruits USP4 to its substrate PRPF3. Interacts with USP15; the interaction is direct.

The protein localises to the nucleus. It is found in the nucleoplasm. The protein resides in the cajal body. Its subcellular location is the nucleus speckle. It localises to the cytoplasm. Its function is as follows. U6 snRNP-binding protein that functions as a recycling factor of the splicing machinery. Promotes the initial reassembly of U4 and U6 snRNPs following their ejection from the spliceosome during its maturation. Also binds U6atac snRNPs and may function as a recycling factor for U4atac/U6atac spliceosomal snRNP, an initial step in the assembly of U12-type spliceosomal complex. The U12-type spliceosomal complex plays a role in the splicing of introns with non-canonical splice sites. May also function as a substrate-targeting factor for deubiquitinases like USP4 and USP15. Recruits USP4 to ubiquitinated PRPF3 within the U4/U5/U6 tri-snRNP complex, promoting PRPF3 deubiquitination and thereby regulating the spliceosome U4/U5/U6 tri-snRNP spliceosomal complex disassembly. May also recruit the deubiquitinase USP15 to histone H2B and mediate histone deubiquitination, thereby regulating gene expression and/or DNA repair. May play a role in hematopoiesis probably through transcription regulation of specific genes including MYC. This is Spliceosome associated factor 3, U4/U6 recycling protein from Pongo abelii (Sumatran orangutan).